The sequence spans 272 residues: uncharacterized protein (272 aa).

A signal peptide spans 1 to 22 (MEYIKKIALYMSVLLLIIFIGG). A lipid anchor (N-palmitoyl cysteine) is attached at Cys-23. A lipid anchor (S-diacylglycerol cysteine) is attached at Cys-23.

It belongs to the staphylococcal tandem lipoprotein family.

The protein resides in the cell membrane. This is an uncharacterized protein from Staphylococcus aureus (strain MRSA252).